An 840-amino-acid polypeptide reads, in one-letter code: Homeobox-leucine zipper protein HOX9 (840 aa).

Disordered stretches follow at residues 1–26 (MAAAVAMRSGSGSDGGGGGYDKAGMD) and 135–160 (NPSLGNDTSCESNVTTPQNPLRDASN). Over residues 12-21 (GSDGGGGGYD) the composition is skewed to gly residues. Residues 26–89 (DSGKYVRYTP…NRRCRDKQRK (64 aa)) constitute a DNA-binding region (homeobox). Residues 86–135 (KQRKEASRLQAVNRKLTAMNKLLMEENERLQKQVSQLVHENAYMKQQLQN) adopt a coiled-coil conformation. An START domain is found at 157-385 (DASNPSGLLT…IAQETSGEVV (229 aa)).

It belongs to the HD-ZIP homeobox family. Class III subfamily. In terms of tissue distribution, expressed in seedlings, roots, stems, leaf sheaths and blades and panicles.

The protein resides in the nucleus. Probable transcription factor. In Oryza sativa subsp. indica (Rice), this protein is Homeobox-leucine zipper protein HOX9 (HOX9).